The primary structure comprises 182 residues: Adenylate kinase (182 aa).

12–17 (GAGKGT) lines the ATP pocket. Residues 32 to 61 (STGELLRKEIEMNTNLGIQVKDIMNRGELV) are NMP. AMP-binding positions include Thr33, Arg38, 59–61 (ELV), 85–88 (GYPR), and Gln92. Residues 126-132 (LRGRKDD) form an LID region. Arg127 is an ATP binding site. The AMP site is built by Arg129 and Arg140. Arg168 lines the ATP pocket.

This sequence belongs to the adenylate kinase family. In terms of assembly, monomer.

Its subcellular location is the cytoplasm. The catalysed reaction is AMP + ATP = 2 ADP. It participates in purine metabolism; AMP biosynthesis via salvage pathway; AMP from ADP: step 1/1. Catalyzes the reversible transfer of the terminal phosphate group between ATP and AMP. Plays an important role in cellular energy homeostasis and in adenine nucleotide metabolism. The chain is Adenylate kinase from Prochlorococcus marinus (strain AS9601).